The following is a 676-amino-acid chain: DNA ligase (676 aa).

Residues 1–10 show a composition bias toward basic and acidic residues; the sequence is MTQAHHDDAG. The interval 1–23 is disordered; that stretch reads MTQAHHDDAGARNALQGGLATDP. NAD(+)-binding positions include 52-56 and 95-96; these read DAAFD and SL. The active-site N6-AMP-lysine intermediate is the Lys-148. Arg-169, Glu-203, and Lys-330 together coordinate NAD(+). Zn(2+) is bound by residues Cys-420, Cys-423, Cys-436, and Cys-441. Residues 593 to 676 enclose the BRCT domain; it reads EAEGPLAGLT…DKLIAERRGG (84 aa).

It belongs to the NAD-dependent DNA ligase family. LigA subfamily. It depends on Mg(2+) as a cofactor. Requires Mn(2+) as cofactor.

The enzyme catalyses NAD(+) + (deoxyribonucleotide)n-3'-hydroxyl + 5'-phospho-(deoxyribonucleotide)m = (deoxyribonucleotide)n+m + AMP + beta-nicotinamide D-nucleotide.. DNA ligase that catalyzes the formation of phosphodiester linkages between 5'-phosphoryl and 3'-hydroxyl groups in double-stranded DNA using NAD as a coenzyme and as the energy source for the reaction. It is essential for DNA replication and repair of damaged DNA. The protein is DNA ligase of Sorangium cellulosum (strain So ce56) (Polyangium cellulosum (strain So ce56)).